Reading from the N-terminus, the 108-residue chain is MSFSRRAKVTKSDIVNQISLNIKNSNEKLEKKYIRLVVDAFFEELKNSLCLNNVIEFRSFGTFELRKRKGRQNARNPQTGEYVNVDDHHVAYFRPGKDLKERVWGIKG.

This sequence belongs to the bacterial histone-like protein family.

Functionally, histone-like DNA-binding protein which is capable of wrapping DNA to stabilize it, and thus to prevent its denaturation under extreme environmental conditions. In Borrelia turicatae, this protein is DNA-binding protein HBbu (hbb).